The primary structure comprises 251 residues: Large ribosomal subunit protein uL3 (251 aa).

Gln-151 carries the N5-methylglutamine modification. Residues 221 to 251 are disordered; the sequence is GLKQAANSNDSAAADTPAEVAAVEATEGQEG. The span at 225–251 shows a compositional bias: low complexity; that stretch reads AANSNDSAAADTPAEVAAVEATEGQEG.

Belongs to the universal ribosomal protein uL3 family. Part of the 50S ribosomal subunit. Forms a cluster with proteins L14 and L19. Methylated by PrmB.

One of the primary rRNA binding proteins, it binds directly near the 3'-end of the 23S rRNA, where it nucleates assembly of the 50S subunit. In Novosphingobium aromaticivorans (strain ATCC 700278 / DSM 12444 / CCUG 56034 / CIP 105152 / NBRC 16084 / F199), this protein is Large ribosomal subunit protein uL3.